We begin with the raw amino-acid sequence, 440 residues long: Transposon Ty1-JR1 Gag polyprotein (440 aa).

The span at 1–16 (MESQQLSQHSHISHGS) shows a compositional bias: low complexity. Disordered stretches follow at residues 1-93 (MESQ…MMTQ), 126-173 (PQSQ…RPPP), and 352-440 (GSRN…PGTY). Polar residues-rich tracts occupy residues 48–60 (TKAN…TPAS) and 127–152 (QSQF…GNTF). The segment covering 153 to 165 (TDSSSADSDMTST) has biased composition (low complexity). The tract at residues 299-401 (NNGIHINNKV…NSKSKTARAH (103 aa)) is RNA-binding. A compositionally biased stretch (low complexity) spans 402 to 418 (NVSTSNNSPSTDNDSIS). Residue S416 is modified to Phosphoserine. Residues 419-428 (KSTTEPIQLN) show a composition bias toward polar residues. Positions 429-440 (NKHDLHLRPGTY) are enriched in basic and acidic residues.

Homotrimer.

It localises to the cytoplasm. Capsid protein (CA) is the structural component of the virus-like particle (VLP), forming the shell that encapsulates the retrotransposons dimeric RNA genome. The particles are assembled from trimer-clustered units and there are holes in the capsid shells that allow for the diffusion of macromolecules. CA also has nucleocapsid-like chaperone activity, promoting primer tRNA(i)-Met annealing to the multipartite primer-binding site (PBS), dimerization of Ty1 RNA and initiation of reverse transcription. The polypeptide is Transposon Ty1-JR1 Gag polyprotein (TY1A-JR1) (Saccharomyces cerevisiae (strain ATCC 204508 / S288c) (Baker's yeast)).